A 218-amino-acid chain; its full sequence is Cytochrome b6 (218 aa).

A helical membrane pass occupies residues 35–55; the sequence is IFYCLGGITLVCFLIQFATGF. Cys-38 lines the heme c pocket. His-89 and His-103 together coordinate heme b. The next 3 helical transmembrane spans lie at 93–113, 119–139, and 189–209; these read ASMM…TGGF, LTWV…VTGY, and LHTF…FLMI. 2 residues coordinate heme b: His-190 and His-205.

This sequence belongs to the cytochrome b family. PetB subfamily. The 4 large subunits of the cytochrome b6-f complex are cytochrome b6, subunit IV (17 kDa polypeptide, PetD), cytochrome f and the Rieske protein, while the 4 small subunits are PetG, PetL, PetM and PetN. The complex functions as a dimer. Heme b is required as a cofactor. It depends on heme c as a cofactor.

It localises to the cellular thylakoid membrane. In terms of biological role, component of the cytochrome b6-f complex, which mediates electron transfer between photosystem II (PSII) and photosystem I (PSI), cyclic electron flow around PSI, and state transitions. This chain is Cytochrome b6, found in Prochlorococcus marinus (strain SARG / CCMP1375 / SS120).